The primary structure comprises 400 residues: NAD-dependent protein deacetylase sirtuin-7 (400 aa).

The segment at 1 to 28 (MAAGGLSRSERKAAERVRRLREEQQRER) is disordered. The segment covering 8–28 (RSERKAAERVRRLREEQQRER) has biased composition (basic and acidic residues). The 248-residue stretch at 82–329 (PEELQRKVRE…QLLMDELGLE (248 aa)) folds into the Deacetylase sirtuin-type domain. NAD(+) is bound by residues 107 to 126 (GAGISTAASIPDYRGPNGVW) and 167 to 170 (QNCD). Catalysis depends on histidine 187, which acts as the Proton acceptor. Zn(2+) is bound by residues cysteine 195, cysteine 198, cysteine 225, and cysteine 228. NAD(+)-binding positions include 268–270 (GSS), 297–299 (NLQ), and cysteine 315. A disordered region spans residues 354-380 (SHSRKSLCRSREEPGPGDRGAPLSSAP). Arginine 388 is modified (asymmetric dimethylarginine; alternate). Arginine 388 is subject to Omega-N-methylarginine; alternate.

Belongs to the sirtuin family. Class IV subfamily. As to quaternary structure, interacts with UBTF and the RNA polymerase I complex. Interacts with components of the B-WICH complex, such as MYBBP1A, SMARCA5/SNF2H and BAZ1B/WSTF. Interacts with ELK4, leading to stabilization at target promoters for H3K18Ac deacetylation. Interacts with histone H2A and/or histone H2B. Interacts with DNMT1. Interacts with SIRT1. The cofactor is Zn(2+). Phosphorylated during mitosis. Post-translationally, methylation at Arg-388 by PRMT6 inhibits the H3K18Ac histone deacetylase activity, promoting mitochondria biogenesis and maintaining mitochondria respiration. In terms of processing, ubiquitinated via 'Lys-63'-linked ubiquitin chains. Deubiquitinated by USP7, inhibiting the H3K18Ac histone deacetylase activity and regulating gluconeogenesis. Ubiquitinated by E3 ubiquitin-protein ligase complex containing FBXO7; leading to proteasomal degradation.

It is found in the nucleus. It localises to the nucleolus. Its subcellular location is the nucleoplasm. The protein resides in the chromosome. The protein localises to the cytoplasm. The enzyme catalyses N(6)-acetyl-L-lysyl-[protein] + NAD(+) + H2O = 2''-O-acetyl-ADP-D-ribose + nicotinamide + L-lysyl-[protein]. The catalysed reaction is N(6)-glutaryl-L-lysyl-[protein] + NAD(+) + H2O = 2''-O-glutaryl-ADP-D-ribose + nicotinamide + L-lysyl-[protein]. It carries out the reaction N(6)-succinyl-L-lysyl-[protein] + NAD(+) + H2O = 2''-O-succinyl-ADP-D-ribose + nicotinamide + L-lysyl-[protein]. It catalyses the reaction N(6)-propanoyl-L-lysyl-[protein] + NAD(+) + H2O = 3''-O-propanoyl-ADP-D-ribose + nicotinamide + L-lysyl-[protein]. The enzyme catalyses N(6)-decanoyl-L-lysyl-[protein] + NAD(+) + H2O = 2''-O-decanoyl-ADP-D-ribose + nicotinamide + L-lysyl-[protein]. Its activity is regulated as follows. NAD-dependent protein-lysine deacetylase and deacylase activities are activated by nucleic acids. Histone deacetylase activity is activated by DNA. Protein-lysine deacylase activity is activated by RNA. H3K18Ac histone deacetylase activity is inhibited by methylation at Arg-388. H3K18Ac histone deacetylase activity is inhibited by deubiquitination by USP7. NAD-dependent protein-lysine deacylase that can act both as a deacetylase or deacylase (desuccinylase, depropionylase, deglutarylase and dedecanoylase), depending on the context. Specifically mediates deacetylation of histone H3 at 'Lys-18' (H3K18Ac). In contrast to other histone deacetylases, displays strong preference for a specific histone mark, H3K18Ac, directly linked to control of gene expression. H3K18Ac is mainly present around the transcription start site of genes and has been linked to activation of nuclear hormone receptors; SIRT7 thereby acts as a transcription repressor. Moreover, H3K18 hypoacetylation has been reported as a marker of malignancy in various cancers and seems to maintain the transformed phenotype of cancer cells. Also able to mediate deacetylation of histone H3 at 'Lys-36' (H3K36Ac) in the context of nucleosomes. Also mediates deacetylation of non-histone proteins, such as ATM, CDK9, DDX21, DDB1, FBL, FKBP5/FKBP51, GABPB1, RAN, RRP9/U3-55K and POLR1E/PAF53. Enriched in nucleolus where it stimulates transcription activity of the RNA polymerase I complex. Acts by mediating the deacetylation of the RNA polymerase I subunit POLR1E/PAF53, thereby promoting the association of RNA polymerase I with the rDNA promoter region and coding region. In response to metabolic stress, SIRT7 is released from nucleoli leading to hyperacetylation of POLR1E/PAF53 and decreased RNA polymerase I transcription. Required to restore the transcription of ribosomal RNA (rRNA) at the exit from mitosis. Promotes pre-ribosomal RNA (pre-rRNA) cleavage at the 5'-terminal processing site by mediating deacetylation of RRP9/U3-55K, a core subunit of the U3 snoRNP complex. Mediates 'Lys-37' deacetylation of Ran, thereby regulating the nuclear export of NF-kappa-B subunit RELA/p65. Acts as a regulator of DNA damage repair by mediating deacetylation of ATM during the late stages of DNA damage response, promoting ATM dephosphorylation and deactivation. Suppresses the activity of the DCX (DDB1-CUL4-X-box) E3 ubiquitin-protein ligase complexes by mediating deacetylation of DDB1, which prevents the interaction between DDB1 and CUL4 (CUL4A or CUL4B). Activates RNA polymerase II transcription by mediating deacetylation of CDK9, thereby promoting 'Ser-2' phosphorylation of the C-terminal domain (CTD) of RNA polymerase II. Deacetylates FBL, promoting histone-glutamine methyltransferase activity of FBL. Acts as a regulator of mitochondrial function by catalyzing deacetylation of GABPB1. Regulates Akt/AKT1 activity by mediating deacetylation of FKBP5/FKBP51. Required to prevent R-loop-associated DNA damage and transcription-associated genomic instability by mediating deacetylation and subsequent activation of DDX21, thereby overcoming R-loop-mediated stalling of RNA polymerases. In addition to protein deacetylase activity, also acts as a protein-lysine deacylase. Acts as a protein depropionylase by mediating depropionylation of Osterix (SP7), thereby regulating bone formation by osteoblasts. Acts as a histone deglutarylase by mediating deglutarylation of histone H4 on 'Lys-91' (H4K91glu); a mark that destabilizes nucleosomes by promoting dissociation of the H2A-H2B dimers from nucleosomes. Acts as a histone desuccinylase: in response to DNA damage, recruited to DNA double-strand breaks (DSBs) and catalyzes desuccinylation of histone H3 on 'Lys-122' (H3K122succ), thereby promoting chromatin condensation and DSB repair. Also promotes DSB repair by promoting H3K18Ac deacetylation, regulating non-homologous end joining (NHEJ). Along with its role in DNA repair, required for chromosome synapsis during prophase I of female meiosis by catalyzing H3K18Ac deacetylation. Involved in transcriptional repression of LINE-1 retrotransposon via H3K18Ac deacetylation, and promotes their association with the nuclear lamina. Required to stabilize ribosomal DNA (rDNA) heterochromatin and prevent cellular senescence induced by rDNA instability. Acts as a negative regulator of SIRT1 by preventing autodeacetylation of SIRT1, restricting SIRT1 deacetylase activity. In Bos taurus (Bovine), this protein is NAD-dependent protein deacetylase sirtuin-7 (SIRT7).